The sequence spans 416 residues: Serine hydroxymethyltransferase (416 aa).

(6S)-5,6,7,8-tetrahydrofolate-binding positions include leucine 118 and 122–124; that span reads GHL. Lysine 226 carries the post-translational modification N6-(pyridoxal phosphate)lysine. Glutamate 242 serves as a coordination point for (6S)-5,6,7,8-tetrahydrofolate.

This sequence belongs to the SHMT family. In terms of assembly, homodimer. Requires pyridoxal 5'-phosphate as cofactor.

The protein localises to the cytoplasm. The catalysed reaction is (6R)-5,10-methylene-5,6,7,8-tetrahydrofolate + glycine + H2O = (6S)-5,6,7,8-tetrahydrofolate + L-serine. The protein operates within one-carbon metabolism; tetrahydrofolate interconversion. Its pathway is amino-acid biosynthesis; glycine biosynthesis; glycine from L-serine: step 1/1. Its function is as follows. Catalyzes the reversible interconversion of serine and glycine with tetrahydrofolate (THF) serving as the one-carbon carrier. This reaction serves as the major source of one-carbon groups required for the biosynthesis of purines, thymidylate, methionine, and other important biomolecules. Also exhibits THF-independent aldolase activity toward beta-hydroxyamino acids, producing glycine and aldehydes, via a retro-aldol mechanism. The polypeptide is Serine hydroxymethyltransferase (Helicobacter pylori (strain HPAG1)).